A 194-amino-acid chain; its full sequence is MSRKHHKEQEEIQEQETISAGAAETPAEETAAIPAATEADMDAEISARDAEIQKLREEVMRRAAEFENFRKQKEREAALSGTRMLENIVRELLPLIDDLKRLMSHIPAEMQAMAEAKPFIEGVELIHKNFMSLLERKGVKEIEAKGKMLDVNFHEAITQIDAPGAEPDTIVEEYQTGYTLGDRVIRHAKVIVAK.

Residues 1–40 (MSRKHHKEQEEIQEQETISAGAAETPAEETAAIPAATEAD) are disordered. Positions 20–38 (AGAAETPAEETAAIPAATE) are enriched in low complexity.

Belongs to the GrpE family. As to quaternary structure, homodimer.

The protein resides in the cytoplasm. Its function is as follows. Participates actively in the response to hyperosmotic and heat shock by preventing the aggregation of stress-denatured proteins, in association with DnaK and GrpE. It is the nucleotide exchange factor for DnaK and may function as a thermosensor. Unfolded proteins bind initially to DnaJ; upon interaction with the DnaJ-bound protein, DnaK hydrolyzes its bound ATP, resulting in the formation of a stable complex. GrpE releases ADP from DnaK; ATP binding to DnaK triggers the release of the substrate protein, thus completing the reaction cycle. Several rounds of ATP-dependent interactions between DnaJ, DnaK and GrpE are required for fully efficient folding. This is Protein GrpE from Chlorobaculum tepidum (strain ATCC 49652 / DSM 12025 / NBRC 103806 / TLS) (Chlorobium tepidum).